The primary structure comprises 1110 residues: Error-prone DNA polymerase (1110 aa).

The tract at residues 1072–1110 (LGELHEPLNDDRREHPDNPAQRIRHPRDVRILPPSRDFH) is disordered. Composition is skewed to basic and acidic residues over residues 1073 to 1088 (GELH…EHPD) and 1097 to 1110 (PRDV…RDFH).

This sequence belongs to the DNA polymerase type-C family. DnaE2 subfamily.

The protein localises to the cytoplasm. The catalysed reaction is DNA(n) + a 2'-deoxyribonucleoside 5'-triphosphate = DNA(n+1) + diphosphate. DNA polymerase involved in damage-induced mutagenesis and translesion synthesis (TLS). It is not the major replicative DNA polymerase. The protein is Error-prone DNA polymerase of Rhodopseudomonas palustris (strain BisB5).